The primary structure comprises 918 residues: Calcium-transporting ATPase type 2C member 1 (918 aa).

Residues 1-75 (MKVARFQKIP…SEDEPLWKKY (75 aa)) lie on the Cytoplasmic side of the membrane. The chain crosses the membrane as a helical span at residues 76–96 (ISQFKNPLIMLLLASAVISVL). Topologically, residues 97–98 (MH) are extracellular. A helical membrane pass occupies residues 99–119 (QFDDAVSITVAILIVVTVAFV). Residues 120–267 (QEYRSEKSLE…LQKSMDLLGK (148 aa)) are Cytoplasmic-facing. The helical transmembrane segment at 268-288 (QLSFYSFGIIGIIMLVGWLLG) threads the bilayer. Topologically, residues 289 to 302 (KDILEMFTISVSLA) are extracellular. The helical transmembrane segment at 303–323 (VAAIPEGLPIVVTVTLALGVM) threads the bilayer. The Cytoplasmic segment spans residues 324 to 703 (RMVKKRAIVK…IYNNIKNFVR (380 aa)). Asp350 (4-aspartylphosphate intermediate) is an active-site residue. The Mg(2+) site is built by Asp643 and Asp647. A helical transmembrane segment spans residues 704–724 (FQLSTSIAALTLISLATLMNF). At 725–732 (PNPLNAMQ) the chain is on the extracellular side. Residues 733–753 (ILWINIIMDGPPAQSLGVEPV) traverse the membrane as a helical segment. Over 754–773 (DKDVIRKPPRNWKDSILTKN) the chain is Cytoplasmic. The helical transmembrane segment at 774-794 (LILKILVSSIIIVCGTLFVFW) threads the bilayer. Over 795–842 (RELRDNVITPRDTTMTFTCFVFFDMFNALSSRSQTKSVFEIGLCSNKM) the chain is Extracellular. A helical transmembrane segment spans residues 843–863 (FCYAVLGSIMGQLLVIYFPPL). Topologically, residues 864–873 (QKVFQTESLS) are cytoplasmic. A helical transmembrane segment spans residues 874–894 (ILDLLFLLGLTSSVCIVAEII). Residues 895–918 (KKVERSREKIQKHVSSTSSSFLEV) lie on the Extracellular side of the membrane.

It belongs to the cation transport ATPase (P-type) (TC 3.A.3) family. Type IIA subfamily. Monomer. Homodimer.

It localises to the golgi apparatus. The protein localises to the trans-Golgi network membrane. It is found in the golgi stack membrane. The enzyme catalyses Ca(2+)(in) + ATP + H2O = Ca(2+)(out) + ADP + phosphate + H(+). The catalysed reaction is Mn(2+)(in) + ATP + H2O = Mn(2+)(out) + ADP + phosphate + H(+). Its function is as follows. ATP-driven pump that supplies the Golgi apparatus with Ca(2+) and Mn(2+) ions, both essential cofactors for processing and trafficking of newly synthesized proteins in the secretory pathway. Within a catalytic cycle, acquires Ca(2+) or Mn(2+) ions on the cytoplasmic side of the membrane and delivers them to the lumenal side. The transfer of ions across the membrane is coupled to ATP hydrolysis and is associated with a transient phosphorylation that shifts the pump conformation from inward-facing to outward-facing state. Plays a primary role in the maintenance of Ca(2+) homeostasis in the trans-Golgi compartment with a functional impact on Golgi and post-Golgi protein sorting as well as a structural impact on cisternae morphology. Responsible for loading the Golgi stores with Ca(2+) ions in keratinocytes, contributing to keratinocyte differentiation and epidermis integrity. Participates in Ca(2+) and Mn(2+) ions uptake into the Golgi store of hippocampal neurons and regulates protein trafficking required for neural polarity. May also play a role in the maintenance of Ca(2+) and Mn(2+) homeostasis and signaling in the cytosol while preventing cytotoxicity. The sequence is that of Calcium-transporting ATPase type 2C member 1 (ATP2C1) from Pongo abelii (Sumatran orangutan).